A 301-amino-acid chain; its full sequence is Ribonuclease H2 subunit A (301 aa).

The residue at position 1 (Met-1) is an N-acetylmethionine. One can recognise an RNase H type-2 domain in the interval 28 to 251 (PCVLGVDEAG…AQAILEKEAE (224 aa)). A divalent metal cation-binding residues include Asp-34, Glu-35, and Asp-142. A Phosphothreonine modification is found at Thr-217. Phosphoserine is present on Ser-258.

It belongs to the RNase HII family. Eukaryotic subfamily. The RNase H2 complex is a heterotrimer composed of the catalytic subunit RNASEH2A and the non-catalytic subunits RNASEH2B and RNASEH2C. Requires Mn(2+) as cofactor. It depends on Mg(2+) as a cofactor.

The protein localises to the nucleus. The catalysed reaction is Endonucleolytic cleavage to 5'-phosphomonoester.. Functionally, catalytic subunit of RNase HII, an endonuclease that specifically degrades the RNA of RNA:DNA hybrids. Participates in DNA replication, possibly by mediating the removal of lagging-strand Okazaki fragment RNA primers during DNA replication. Mediates the excision of single ribonucleotides from DNA:RNA duplexes. This is Ribonuclease H2 subunit A (Rnaseh2a) from Rattus norvegicus (Rat).